The following is a 356-amino-acid chain: Protein-arginine kinase (356 aa).

The region spanning isoleucine 24 to alanine 254 is the Phosphagen kinase C-terminal domain. ATP contacts are provided by residues serine 27–arginine 31, histidine 92, arginine 125, arginine 176–methionine 180, and arginine 207–glutamate 212. Residues arginine 337–alanine 342 carry the RDXXRA motif of the pArg binding pocket involved in allosteric regulation motif.

This sequence belongs to the ATP:guanido phosphotransferase family.

The catalysed reaction is L-arginyl-[protein] + ATP = N(omega)-phospho-L-arginyl-[protein] + ADP + H(+). Appears to be allosterically activated by the binding of pArg-containing polypeptides to the pArg-binding pocket localized in the C-terminal domain of McsB. Its function is as follows. Catalyzes the specific phosphorylation of arginine residues in a large number of proteins. Is part of the bacterial stress response system. Protein arginine phosphorylation has a physiologically important role and is involved in the regulation of many critical cellular processes, such as protein homeostasis, motility, competence, and stringent and stress responses, by regulating gene expression and protein activity. In Bacillus cytotoxicus (strain DSM 22905 / CIP 110041 / 391-98 / NVH 391-98), this protein is Protein-arginine kinase.